Reading from the N-terminus, the 200-residue chain is Holliday junction resolvase RecU (200 aa).

Mg(2+)-binding residues include T82, D84, E97, and Q116.

It belongs to the RecU family. It depends on Mg(2+) as a cofactor.

Its subcellular location is the cytoplasm. The enzyme catalyses Endonucleolytic cleavage at a junction such as a reciprocal single-stranded crossover between two homologous DNA duplexes (Holliday junction).. Its function is as follows. Endonuclease that resolves Holliday junction intermediates in genetic recombination. Cleaves mobile four-strand junctions by introducing symmetrical nicks in paired strands. Promotes annealing of linear ssDNA with homologous dsDNA. Required for DNA repair, homologous recombination and chromosome segregation. This is Holliday junction resolvase RecU from Streptococcus gordonii (strain Challis / ATCC 35105 / BCRC 15272 / CH1 / DL1 / V288).